The primary structure comprises 132 residues: MFLTDPISDLIVRIKNANQRKHKTVEIPHSNKKEAIVKLIKEEGYISSYSVEGSKKTDKRLLVTLKYKGKQSAIVGIKRVSKPGLRVYVKSEEIPKVLSGYGTCIMSTSKGLMTDKEARKANVGGEIIAFIW.

It belongs to the universal ribosomal protein uS8 family. As to quaternary structure, part of the 30S ribosomal subunit. Contacts proteins S5 and S12.

In terms of biological role, one of the primary rRNA binding proteins, it binds directly to 16S rRNA central domain where it helps coordinate assembly of the platform of the 30S subunit. The chain is Small ribosomal subunit protein uS8 from Mycoplasmopsis synoviae (strain 53) (Mycoplasma synoviae).